The primary structure comprises 458 residues: Argininosuccinate lyase (458 aa).

The protein belongs to the lyase 1 family. Argininosuccinate lyase subfamily.

It is found in the cytoplasm. The catalysed reaction is 2-(N(omega)-L-arginino)succinate = fumarate + L-arginine. Its pathway is amino-acid biosynthesis; L-arginine biosynthesis; L-arginine from L-ornithine and carbamoyl phosphate: step 3/3. This is Argininosuccinate lyase from Salmonella choleraesuis (strain SC-B67).